The sequence spans 859 residues: Cleavage factor two protein 2 (859 aa).

The segment at 560 to 611 (PDDSDNVNQNSRKRPLKDGAKTTSPVNEEDNKNEEEDGYNMSDPISKRSKHR) is disordered. The span at 586-597 (NEEDNKNEEEDG) shows a compositional bias: acidic residues.

Component of the cleavage and polyadenylation factor (CPF) complex, which is composed of at least PTI1, SYC1, SSU72, GLC7, MPE1, REF2, PFS2, PTA1, YSH1/BRR5, SWD2, CFT2/YDH1, YTH1, CFT1/YHH1, FIP1 and PAP1. Interacts with the CTD domain of RPB1/RNA polymerase II; the interaction is enhanced upon phosphorylation of the RPB1 CTD domain. Interacts with PCF11.

The protein resides in the nucleus. Functionally, RNA-binding component of the cleavage and polyadenylation factor (CPF) complex, which plays a key role in polyadenylation-dependent pre-mRNA 3'-end formation and cooperates with cleavage factors including the CFIA complex and NAB4/CFIB. May be involved in poly(A)-site recognition. May be involved in the association of the CPF, CPFIA and RNA polymerase II complexes. This Saccharomyces cerevisiae (strain ATCC 204508 / S288c) (Baker's yeast) protein is Cleavage factor two protein 2 (CFT2).